The primary structure comprises 571 residues: Glutamate--tRNA ligase (571 aa).

The short motif at 114–124 (PNPNGPWHVGH) is the 'HIGH' region element. A disordered region spans residues 431-453 (KPLAGGPESASPPLHPNDEDRGR).

This sequence belongs to the class-I aminoacyl-tRNA synthetase family. Glutamate--tRNA ligase type 2 subfamily.

The protein localises to the cytoplasm. The catalysed reaction is tRNA(Glu) + L-glutamate + ATP = L-glutamyl-tRNA(Glu) + AMP + diphosphate. Catalyzes the attachment of glutamate to tRNA(Glu) in a two-step reaction: glutamate is first activated by ATP to form Glu-AMP and then transferred to the acceptor end of tRNA(Glu). This Natronomonas pharaonis (strain ATCC 35678 / DSM 2160 / CIP 103997 / JCM 8858 / NBRC 14720 / NCIMB 2260 / Gabara) (Halobacterium pharaonis) protein is Glutamate--tRNA ligase.